The primary structure comprises 339 residues: Replication factor C subunit 2 (339 aa).

48 to 55 (YGPPGTGK) provides a ligand contact to ATP.

Belongs to the activator 1 small subunits family. As to quaternary structure, heterotetramer of subunits RFC2, RFC3, RFC4 and RFC5 that can form a complex with RFC1. As to expression, expressed in roots, leaves, shoot apical meristem (SAM), flag leaves and panicles.

It localises to the nucleus. Its function is as follows. May be involved in DNA replication and thus regulate cell proliferation. In Oryza sativa subsp. japonica (Rice), this protein is Replication factor C subunit 2 (RFC2).